A 904-amino-acid polypeptide reads, in one-letter code: Endoplasmic reticulum metallopeptidase 1 (904 aa).

M1 is subject to N-acetylmethionine. At 1–63 (MEWGSESAAV…PGGSGGASRG (63 aa)) the chain is on the cytoplasmic side. Positions 1 to 65 (MEWGSESAAV…GSGGASRGAG (65 aa)) are disordered. Gly residues predominate over residues 55 to 65 (GGSGGASRGAG). Residues 64-84 (AGTGLSEVRAALGLALYLIAL) form a helical membrane-spanning segment. Residues 85–399 (RTLVQLSLQQ…AASKYRHGNM (315 aa)) are Lumenal-facing. Residue N182 is glycosylated (N-linked (GlcNAc...) asparagine). Cysteines 204 and 222 form a disulfide. H205 and D217 together coordinate Zn(2+). The active-site Proton acceptor is E251. Zn(2+) contacts are provided by E252, E278, and H354. Residues 400–420 (VFFDVLGLFVIAYPSRIGSII) form a helical membrane-spanning segment. Over 421–457 (NYMVVMGVVLYLGKKFLQPKHKTGNYKKDFLCGLGIT) the chain is Cytoplasmic. The chain crosses the membrane as a helical span at residues 458-478 (LISWFTSLVTVLIIAVFISLI). Over 479 to 489 (GQSLSWYNHFY) the chain is Lumenal. Residues 490 to 510 (VSVCLYGTATVAKIILIHTLA) traverse the membrane as a helical segment. The Cytoplasmic portion of the chain corresponds to 511 to 519 (KRFYYMNAS). A helical transmembrane segment spans residues 520 to 540 (AQYLGEVFFDISLFVHCCFLV). T541 is a topological domain (lumenal). A helical transmembrane segment spans residues 542-562 (LTYQGLCSAFISAVWVAFPLL). Topologically, residues 563-579 (TKLCVHKDFKQHGAQGK) are cytoplasmic. A helical transmembrane segment spans residues 580–600 (FIAFYLLGMFIPYLYALYLIW). At 601–621 (AVFEMFTPILGRSGSEIPPDV) the chain is on the lumenal side. A helical transmembrane segment spans residues 622-642 (VLASILAGCTMILSSYFINFI). The Cytoplasmic segment spans residues 643-651 (YLAKSTKKT). A helical membrane pass occupies residues 652–672 (MLTLTLVCAITFLLVCSGTFF). Topologically, residues 673 to 904 (PYSSNPANPK…WVCTYDLFVF (232 aa)) are lumenal. N-linked (GlcNAc...) asparagine glycosylation is present at N730.

Belongs to the peptidase M28 family. It depends on Zn(2+) as a cofactor.

The protein localises to the endoplasmic reticulum membrane. Its function is as follows. Within the ovary, required for the organization of somatic cells and oocytes into discrete follicular structures. The chain is Endoplasmic reticulum metallopeptidase 1 from Homo sapiens (Human).